Reading from the N-terminus, the 139-residue chain is Large ribosomal subunit protein uL16 (139 aa).

Over residues 1–11 the composition is skewed to basic residues; it reads MLQPKRTKYRK. Positions 1–30 are disordered; that stretch reads MLQPKRTKYRKPFLQSHDKRKAHKGNKVSF.

Belongs to the universal ribosomal protein uL16 family. As to quaternary structure, part of the 50S ribosomal subunit.

Its function is as follows. Binds 23S rRNA and is also seen to make contacts with the A and possibly P site tRNAs. The sequence is that of Large ribosomal subunit protein uL16 from Mycoplasmopsis synoviae (strain 53) (Mycoplasma synoviae).